A 93-amino-acid polypeptide reads, in one-letter code: Leukocyte-specific transcript 1 protein (93 aa).

Residues 14–32 (AGSCCWLWSFCPPACIGCI) traverse the membrane as a helical segment. The residue at position 54 (S54) is a Phosphoserine. The tract at residues 57–82 (RLPVSSSEGPDLRDRDKRGTKEDPRA) is disordered. Basic and acidic residues predominate over residues 66–82 (PDLRDRDKRGTKEDPRA).

This sequence belongs to the LST1 family.

It is found in the membrane. It localises to the golgi apparatus membrane. Its subcellular location is the endomembrane system. Its function is as follows. Possible role in modulating immune responses. Has an inhibitory effect on lymphocyte proliferation. Induces morphological changes including production of filopodia and microspikes when overexpressed in a variety of cell types and may be involved in dendritic cell maturation. This is Leukocyte-specific transcript 1 protein (LST1) from Macaca mulatta (Rhesus macaque).